The sequence spans 247 residues: 5-oxoprolinase subunit A (247 aa).

Belongs to the LamB/PxpA family. As to quaternary structure, forms a complex composed of PxpA, PxpB and PxpC.

It catalyses the reaction 5-oxo-L-proline + ATP + 2 H2O = L-glutamate + ADP + phosphate + H(+). Its function is as follows. Catalyzes the cleavage of 5-oxoproline to form L-glutamate coupled to the hydrolysis of ATP to ADP and inorganic phosphate. This is 5-oxoprolinase subunit A from Vibrio vulnificus (strain CMCP6).